Here is a 383-residue protein sequence, read N- to C-terminus: Soluble hydrogenase 42 kDa subunit (383 aa).

K194 bears the N6-(pyridoxal phosphate)lysine mark.

This sequence belongs to the class-V pyridoxal-phosphate-dependent aminotransferase family. In terms of assembly, heterodimer of a large and a small subunit. Requires pyridoxal 5'-phosphate as cofactor.

The protein localises to the cytoplasm. Its function is as follows. Soluble hydrogenase catalyzes both production and consumption of hydrogen from suitable artificial electron donors or acceptors. This subunit catalyzes the tritium-exchange activity. This Anabaena cylindrica protein is Soluble hydrogenase 42 kDa subunit.